A 157-amino-acid polypeptide reads, in one-letter code: uncharacterized protein (157 aa).

A run of 4 helical transmembrane segments spans residues 3 to 23 (IFSF…MFIS), 24 to 44 (AFLS…ALAV), 47 to 67 (LMLG…ATAG), and 105 to 125 (IALL…IAGW).

It to E.coli YqaA.

The protein localises to the cell membrane. This is an uncharacterized protein from Haemophilus influenzae (strain ATCC 51907 / DSM 11121 / KW20 / Rd).